The chain runs to 2812 residues: Polyunsaturated fatty acid synthase subunit A (2812 aa).

A Ketosynthase family 3 (KS3) domain is found at 12 to 472 (DTRIAVIGMS…GANYHAVLEE (461 aa)). Active-site for beta-ketoacyl synthase activity residues include Cys213, His348, and His390. Residues 602-913 (LFSGQGAQYT…TVSVNPASGK (312 aa)) form the Malonyl-CoA:ACP transacylase (MAT) domain. Residues 1000–1048 (DEEAKREAARLQKQLEDAQRQLDEAKRAADEANQKLAAAKEEAKSAAAS) are a coiled coil. 3 consecutive Carrier domains span residues 1114–1193 (ALLA…KAEI), 1232–1308 (ERAE…KAEI), and 1342–1418 (AKAE…KAEI). Residues Ser1152, Ser1267, and Ser1377 each carry the O-(pantetheine 4'-phosphoryl)serine modification. Positions 1422–1442 (SAPAPAAAAPAPAAPAPAAAA) are disordered. The span at 1423–1442 (APAPAAAAPAPAAPAPAAAA) shows a compositional bias: low complexity. In terms of domain architecture, Carrier 4 spans 1455–1531 (AKAETVVMEV…EVVDAMKAEI (77 aa)). Ser1490 bears the O-(pantetheine 4'-phosphoryl)serine mark. Residues 1535 to 1555 (SAPAPAAAAPAPAAPAPAAAA) form a disordered region. A compositionally biased stretch (low complexity) spans 1536 to 1555 (APAPAAAAPAPAAPAPAAAA). Carrier domains are found at residues 1568 to 1644 (AKAE…KAEI), 1681 to 1757 (AKAE…KAEI), 1792 to 1868 (AKAE…KAEI), and 1903 to 1979 (AKAE…KAEI). O-(pantetheine 4'-phosphoryl)serine occurs at positions 1603, 1716, 1827, and 1938. One can recognise a Ketoreductase (KR) domain in the interval 2257–2484 (VVSGGARGIT…VKSICFGPWD (228 aa)). Positions 2524–2651 (EILVGNWRTP…RAVVVLSSQG (128 aa)) are N-terminal hotdog fold. Positions 2524–2812 (EILVGNWRTP…SVIATDSLAF (289 aa)) constitute a PKS/mFAS DH domain. Residues 2540–2800 (ETITLHRKIS…NEQGDLFIDV (261 aa)) form a dehydratase (DH) domain region. His2559 acts as the Proton acceptor; for dehydratase activity in catalysis. Residues 2666 to 2812 (ADPAAQSAVY…SVIATDSLAF (147 aa)) are C-terminal hotdog fold. Asp2730 serves as the catalytic Proton donor; for dehydratase activity.

As to quaternary structure, component of the polyunsaturated fatty acid synthase complex composed of at least ORF-A, ORF-B and ORF-C. Pantetheine 4'-phosphate serves as cofactor.

It participates in lipid metabolism; fatty acid biosynthesis. Poliketide synthase-like protein; part of the polyunsaturated fatty acid synthase composed of the 3 PKS-like subunits A, B and C. While the saturated fatty acids (SFAs) in Thraustochytrium are produced by the conventional fatty acid synthase (FAS) pathway, polyunsaturated fatty acids (PUFAs) including docosahexeanoic acid (DHA) and docosapentaenoic acid (DPA) are synthesized via an anaerobical PKS pathway. PUFA synthase assimilates fatty acyl-CoA, the product of FAS, as the starter unit to synthesize DPA, and this starter unit may be butyryl-CoA, hexanoyl-CoA, or octanoyl-CoA. DPA and DHA biosynthesis seem to differ by the reduction at the N-3 position by PUFA synthase, not the extension of carbon chain. In DHA biosynthesis, PUFA synthase extends the fatty acyl chain from the methyl toward the carboxyl end, and the double bond is formed when the carbon chain is growing, instead of afterward. Therefore, PUFA synthase is unable to transform DPA to DHA, suggesting that DPA is not the precursor of DHA. Moreover, DPA molecule is partly extended by FAS KS domain, so DPA biosynthesis is less dependent on PUFA synthase KS domain than DHA. In Thraustochytrium sp. (strain ATCC 26185 / S-3), this protein is Polyunsaturated fatty acid synthase subunit A.